A 161-amino-acid polypeptide reads, in one-letter code: Lipid droplet assembly factor 1 (161 aa).

The Cytoplasmic portion of the chain corresponds to 1–43; sequence MAKEEPQSISRDLQELQKKLSLLIDSFQNNSKVVAFMKSPVGQ. Residues 44-61 traverse the membrane as a helical segment; it reads YLDSHPFLAFTLLVFIVM. Over 62-67 the chain is Lumenal; the sequence is SAVPVG. A helical transmembrane segment spans residues 68–87; that stretch reads FFLLIVVLTTLAALLGVIIL. Residues 88–93 are Cytoplasmic-facing; it reads EGLVIS. The helical transmembrane segment at 94-110 threads the bilayer; that stretch reads VGGFSLLCILCGLGFVS. The Lumenal portion of the chain corresponds to 111-116; sequence LAMSGM. Residues 117–133 traverse the membrane as a helical segment; it reads MIASYVVVSSLISCWFS. At 134–161 the chain is on the cytoplasmic side; sequence PRPLTQQNTSCDFLPAMKSAEFEGLYQE.

Belongs to the LDAF1 family. As to quaternary structure, interacts with isoform 1 and isoform 3 of BSCL2/seipin to form an oligomeric complex. As to expression, expressed at high levels in the heart and skeletal muscle. Expressed at low levels in kidney, small intestine, lung and liver.

The protein resides in the endoplasmic reticulum membrane. The protein localises to the lipid droplet. Functionally, plays an important role in the formation of lipid droplets (LD) which are storage organelles at the center of lipid and energy homeostasis. In association with BSCL2/seipin, defines the sites of LD formation in the endoplasmic reticulum. The polypeptide is Lipid droplet assembly factor 1 (Homo sapiens (Human)).